We begin with the raw amino-acid sequence, 336 residues long: F420-dependent glucose-6-phosphate dehydrogenase (336 aa).

Asp40 contributes to the coenzyme F420-(gamma-Glu)n binding site. The active-site Proton donor is His41. Coenzyme F420-(gamma-Glu)n contacts are provided by residues Thr77 and 108 to 109 (TG). Glu110 functions as the Proton acceptor in the catalytic mechanism. Residues Asn113, 176 to 177 (SG), and 179 to 180 (AA) each bind coenzyme F420-(gamma-Glu)n. 4 residues coordinate substrate: Thr194, Lys197, Lys258, and Arg282.

It belongs to the F420-dependent glucose-6-phosphate dehydrogenase family. Homodimer.

The enzyme catalyses oxidized coenzyme F420-(gamma-L-Glu)(n) + D-glucose 6-phosphate + H(+) = 6-phospho-D-glucono-1,5-lactone + reduced coenzyme F420-(gamma-L-Glu)(n). Catalyzes the coenzyme F420-dependent oxidation of glucose 6-phosphate (G6P) to 6-phosphogluconolactone. The sequence is that of F420-dependent glucose-6-phosphate dehydrogenase from Microbacterium testaceum (strain StLB037).